Here is a 262-residue protein sequence, read N- to C-terminus: MAVAVEGARRKERILCLFDVDGTLTPARQKIDPEVSAFLQKLRSRVQIGVVGGSDYSKIAEQLGEGDEVIEKFDYVFAENGTVQYKHGRLLSKQTIQNHLGEELLQDLINFCLSYMALLRLPKKRGTFIEFRNGMLNVSPIGRSCTLEERIEFSELDKKEKIREKFVEALKTEFAGKGLRFSRGGMISFDVFPEGWDKRYCLDSLDEDSFDIIHFFGNETSPGGNDFEIYADPRTVGHSVVSPQDTVQRCRELFFPETAHEA.

N-acetylalanine is present on Ala-2. The active-site Nucleophile is Asp-19. Mg(2+) contacts are provided by Asp-19 and Asp-21. Residue Asp-21 is the Proton donor/acceptor of the active site. Alpha-D-mannose 1-phosphate contacts are provided by Arg-28, Arg-132, Arg-143, Arg-150, Met-186, Ser-188, and Asp-190. Mg(2+) contacts are provided by Asn-218, Tyr-230, Asp-232, and Thr-235. Ser-242 bears the Phosphoserine mark.

It belongs to the eukaryotic PMM family. As to quaternary structure, homodimer. Requires Mg(2+) as cofactor. Present in brain, where it is restricted to neuronal cell bodies. Present at lower levels in pancreas, liver, lung, gonads, uterus, adrenal glands and pituitary (at protein level). Undetectable in intestine.

The protein localises to the cytoplasm. It catalyses the reaction alpha-D-mannose 1-phosphate = D-mannose 6-phosphate. It participates in nucleotide-sugar biosynthesis; GDP-alpha-D-mannose biosynthesis; alpha-D-mannose 1-phosphate from D-fructose 6-phosphate: step 2/2. With respect to regulation, IMP, a metabolite whose concentration is elevated in anoxia, inhibits phosphomannomutase and phosphoglucomutase activities and strongly enhances glucose-1,6-bisphosphatase activity. Involved in the synthesis of the GDP-mannose and dolichol-phosphate-mannose required for a number of critical mannosyl transfer reactions. In addition, may be responsible for the degradation of glucose-1,6-bisphosphate in ischemic brain. The polypeptide is Phosphomannomutase 1 (Pmm1) (Mus musculus (Mouse)).